We begin with the raw amino-acid sequence, 335 residues long: N-acetyl-gamma-glutamyl-phosphate reductase (335 aa).

The active site involves cysteine 156.

This sequence belongs to the NAGSA dehydrogenase family. Type 1 subfamily.

It localises to the cytoplasm. The catalysed reaction is N-acetyl-L-glutamate 5-semialdehyde + phosphate + NADP(+) = N-acetyl-L-glutamyl 5-phosphate + NADPH + H(+). It participates in amino-acid biosynthesis; L-arginine biosynthesis; N(2)-acetyl-L-ornithine from L-glutamate: step 3/4. Functionally, catalyzes the NADPH-dependent reduction of N-acetyl-5-glutamyl phosphate to yield N-acetyl-L-glutamate 5-semialdehyde. The protein is N-acetyl-gamma-glutamyl-phosphate reductase of Tolumonas auensis (strain DSM 9187 / NBRC 110442 / TA 4).